We begin with the raw amino-acid sequence, 702 residues long: Polyribonucleotide nucleotidyltransferase 2 (702 aa).

Residues Asp-483 and Asp-489 each coordinate Mg(2+). The 60-residue stretch at 550–609 folds into the KH domain; the sequence is PQVTKLKVHPDKVREVIGAGGKVINKIIDETGVKINIENDGTIYIAAPDQESARVALEMI. The 69-residue stretch at 619–687 folds into the S1 motif domain; sequence GEVYTGKVIK…PQGKIGLSRK (69 aa).

The protein belongs to the polyribonucleotide nucleotidyltransferase family. Mg(2+) is required as a cofactor.

The protein resides in the cytoplasm. It catalyses the reaction RNA(n+1) + phosphate = RNA(n) + a ribonucleoside 5'-diphosphate. In terms of biological role, involved in mRNA degradation. Catalyzes the phosphorolysis of single-stranded polyribonucleotides processively in the 3'- to 5'-direction. The sequence is that of Polyribonucleotide nucleotidyltransferase 2 from Alkaliphilus metalliredigens (strain QYMF).